The chain runs to 681 residues: Minichromosome maintenance domain-containing protein 2 (681 aa).

Residue Ser-292 is modified to Phosphoserine. An MCM domain is found at 533 to 621; it reads KQFTTEDFEK…LIAALLFEIS (89 aa).

Functionally, plays an important role in meiotic recombination and associated DNA double-strand break repair. This chain is Minichromosome maintenance domain-containing protein 2 (Mcmdc2), found in Rattus norvegicus (Rat).